A 206-amino-acid chain; its full sequence is FMN-dependent NADH:quinone oxidoreductase (206 aa).

Residues serine 10, 16 to 18 (SSS), 93 to 96 (MYNF), and 137 to 140 (TRGG) contribute to the FMN site.

The protein belongs to the azoreductase type 1 family. In terms of assembly, homodimer. FMN serves as cofactor.

It carries out the reaction 2 a quinone + NADH + H(+) = 2 a 1,4-benzosemiquinone + NAD(+). It catalyses the reaction N,N-dimethyl-1,4-phenylenediamine + anthranilate + 2 NAD(+) = 2-(4-dimethylaminophenyl)diazenylbenzoate + 2 NADH + 2 H(+). Quinone reductase that provides resistance to thiol-specific stress caused by electrophilic quinones. In terms of biological role, also exhibits azoreductase activity. Catalyzes the reductive cleavage of the azo bond in aromatic azo compounds to the corresponding amines. This is FMN-dependent NADH:quinone oxidoreductase from Psychromonas ingrahamii (strain DSM 17664 / CCUG 51855 / 37).